A 172-amino-acid chain; its full sequence is Translationally-controlled tumor protein homolog (172 aa).

The TCTP domain maps to 1–172 (MIIYKDCITE…FKDGLIIEKC (172 aa)).

This sequence belongs to the TCTP family.

The protein localises to the cytoplasm. Functionally, involved in calcium binding and microtubule stabilization. This Xenopus laevis (African clawed frog) protein is Translationally-controlled tumor protein homolog (tpt1).